Consider the following 85-residue polypeptide: UPF0291 protein SGO_0570 (85 aa).

The segment at 56–85 (EDGNDVTPEKLRQVQREKGLHGRSLDDPNS) is disordered. Residues 62-85 (TPEKLRQVQREKGLHGRSLDDPNS) show a composition bias toward basic and acidic residues.

The protein belongs to the UPF0291 family.

The protein resides in the cytoplasm. The chain is UPF0291 protein SGO_0570 from Streptococcus gordonii (strain Challis / ATCC 35105 / BCRC 15272 / CH1 / DL1 / V288).